Reading from the N-terminus, the 226-residue chain is ATP-dependent dethiobiotin synthetase BioD (226 aa).

12 to 17 serves as a coordination point for ATP; the sequence is DAGKTV. Thr16 contacts Mg(2+). The active site involves Lys39. Substrate is bound at residue Ser43. ATP-binding positions include Asp47, 108–111, 168–169, 200–202, and Asn207; these read EGVG, NC, and PYL. Mg(2+)-binding residues include Asp47 and Glu108.

Belongs to the dethiobiotin synthetase family. Homodimer. Mg(2+) serves as cofactor.

Its subcellular location is the cytoplasm. The catalysed reaction is (7R,8S)-7,8-diammoniononanoate + CO2 + ATP = (4R,5S)-dethiobiotin + ADP + phosphate + 3 H(+). The enzyme catalyses (7R,8S)-8-amino-7-(carboxyamino)nonanoate + ATP = (4R,5S)-dethiobiotin + ADP + phosphate + H(+). The protein operates within cofactor biosynthesis; biotin biosynthesis; biotin from 7,8-diaminononanoate: step 1/2. Catalyzes a mechanistically unusual reaction, the ATP-dependent insertion of CO2 between the N7 and N8 nitrogen atoms of 7,8-diaminopelargonic acid (DAPA, also called 7,8-diammoniononanoate) to form a ureido ring. This cyanobacterium does not encode bioA (which catalyzes the formation of the precursor for this reaction in the cannonical pathway), instead it encodes bioU, which replaces bioA and also performs the first half of the cannonical BioD reaction. Thus in this organism BioD has a different substrate. This Cyanothece sp. (strain PCC 7425 / ATCC 29141) protein is ATP-dependent dethiobiotin synthetase BioD.